The primary structure comprises 569 residues: Probable ABC transporter permease protein y4fN (569 aa).

A run of 13 helical transmembrane segments spans residues V10–P30, V68–V88, G98–G118, F121–P141, F145–L165, V196–A216, P247–L267, L304–F324, M363–V383, I395–A415, L426–L446, V480–L500, and A534–I554. The ABC transmembrane type-1 1 domain maps to L64–S268. Residues F357–V551 form the ABC transmembrane type-1 2 domain.

It belongs to the binding-protein-dependent transport system permease family. CysTW subfamily.

The protein localises to the cell inner membrane. Probably part of the binding-protein-dependent transport system y4fNOP. Probably responsible for the translocation of the substrate across the membrane. The polypeptide is Probable ABC transporter permease protein y4fN (Sinorhizobium fredii (strain NBRC 101917 / NGR234)).